A 227-amino-acid polypeptide reads, in one-letter code: Gamma-glutamyl-hercynylcysteine sulfoxide hydrolase (227 aa).

C2 functions as the Nucleophile in the catalytic mechanism. In terms of domain architecture, Glutamine amidotransferase type-2 spans C2–L227.

It catalyses the reaction gamma-L-glutamyl-hercynylcysteine S-oxide + H2O = S-(hercyn-2-yl)-L-cysteine S-oxide + L-glutamate. Its pathway is amino-acid biosynthesis; ergothioneine biosynthesis. Catalyzes the hydrolysis of the gamma-glutamyl amide bond of hercynyl-gamma-L-glutamyl-L-cysteine sulfoxide to produce hercynylcysteine sulfoxide, a step in the biosynthesis pathway of ergothioneine. The protein is Gamma-glutamyl-hercynylcysteine sulfoxide hydrolase of Mycolicibacterium smegmatis (strain ATCC 700084 / mc(2)155) (Mycobacterium smegmatis).